Here is a 459-residue protein sequence, read N- to C-terminus: ATP-dependent protease ATPase subunit HslU (459 aa).

ATP contacts are provided by residues valine 18, 60-65 (GVGKTE), aspartate 269, glutamate 337, and arginine 409.

The protein belongs to the ClpX chaperone family. HslU subfamily. As to quaternary structure, a double ring-shaped homohexamer of HslV is capped on each side by a ring-shaped HslU homohexamer. The assembly of the HslU/HslV complex is dependent on binding of ATP.

It localises to the cytoplasm. ATPase subunit of a proteasome-like degradation complex; this subunit has chaperone activity. The binding of ATP and its subsequent hydrolysis by HslU are essential for unfolding of protein substrates subsequently hydrolyzed by HslV. HslU recognizes the N-terminal part of its protein substrates and unfolds these before they are guided to HslV for hydrolysis. This Myxococcus xanthus (strain DK1622) protein is ATP-dependent protease ATPase subunit HslU.